Here is an 84-residue protein sequence, read N- to C-terminus: ATP synthase subunit c (84 aa).

The next 2 membrane-spanning stretches (helical) occupy residues 9-29 (IIGASILLAFAALGTAIGFAI) and 54-74 (IVAGLLDAIAMIAVGISLLFI).

This sequence belongs to the ATPase C chain family. As to quaternary structure, F-type ATPases have 2 components, F(1) - the catalytic core - and F(0) - the membrane proton channel. F(1) has five subunits: alpha(3), beta(3), gamma(1), delta(1), epsilon(1). F(0) has three main subunits: a(1), b(2) and c(10-14). The alpha and beta chains form an alternating ring which encloses part of the gamma chain. F(1) is attached to F(0) by a central stalk formed by the gamma and epsilon chains, while a peripheral stalk is formed by the delta and b chains.

Its subcellular location is the cell inner membrane. In terms of biological role, f(1)F(0) ATP synthase produces ATP from ADP in the presence of a proton or sodium gradient. F-type ATPases consist of two structural domains, F(1) containing the extramembraneous catalytic core and F(0) containing the membrane proton channel, linked together by a central stalk and a peripheral stalk. During catalysis, ATP synthesis in the catalytic domain of F(1) is coupled via a rotary mechanism of the central stalk subunits to proton translocation. Functionally, key component of the F(0) channel; it plays a direct role in translocation across the membrane. A homomeric c-ring of between 10-14 subunits forms the central stalk rotor element with the F(1) delta and epsilon subunits. The polypeptide is ATP synthase subunit c (Haemophilus influenzae (strain ATCC 51907 / DSM 11121 / KW20 / Rd)).